Here is a 227-residue protein sequence, read N- to C-terminus: Urease subunit gamma/beta (227 aa).

The urease gamma stretch occupies residues M1 to G101. A urease beta region spans residues G102–R227.

It in the N-terminal section; belongs to the urease gamma subunit family. The protein in the C-terminal section; belongs to the urease beta subunit family. Heterohexamer of 3 UreC (alpha) and 3 UreAB (gamma/beta) subunits.

The protein resides in the cytoplasm. The catalysed reaction is urea + 2 H2O + H(+) = hydrogencarbonate + 2 NH4(+). It functions in the pathway nitrogen metabolism; urea degradation; CO(2) and NH(3) from urea (urease route): step 1/1. The sequence is that of Urease subunit gamma/beta from Streptomyces avermitilis (strain ATCC 31267 / DSM 46492 / JCM 5070 / NBRC 14893 / NCIMB 12804 / NRRL 8165 / MA-4680).